The primary structure comprises 160 residues: Eukaryotic translation initiation factor 5A (160 aa).

Residues 1-13 show a composition bias toward basic and acidic residues; the sequence is MSDSEEHHFESKA. Positions 1–22 are disordered; that stretch reads MSDSEEHHFESKADAGASKTYP. Hypusine is present on K53.

The protein belongs to the eIF-5A family. Post-translationally, lys-53 undergoes hypusination, a unique post-translational modification that consists in the addition of a butylamino group from spermidine to lysine side chain, leading to the formation of the unusual amino acid hypusine. eIF-5As are the only known proteins to undergo this modification, which is essential for their function.

Functionally, translation factor that promotes translation elongation and termination, particularly upon ribosome stalling at specific amino acid sequence contexts. Binds between the exit (E) and peptidyl (P) site of the ribosome and promotes rescue of stalled ribosome: specifically required for efficient translation of polyproline-containing peptides as well as other motifs that stall the ribosome. Acts as a ribosome quality control (RQC) cofactor by joining the RQC complex to facilitate peptidyl transfer during CAT tailing step. The protein is Eukaryotic translation initiation factor 5A (TIF5A) of Zea mays (Maize).